A 379-amino-acid chain; its full sequence is Homoserine O-succinyltransferase (379 aa).

Residues 51–360 enclose the AB hydrolase-1 domain; sequence NAVLICHALS…DAPQGHDAFL (310 aa). Ser-157 acts as the Nucleophile in catalysis. Arg-227 contributes to the substrate binding site. Residues Asp-323 and His-356 contribute to the active site. Substrate is bound at residue Asp-357.

The protein belongs to the AB hydrolase superfamily. MetX family. In terms of assembly, homodimer.

It is found in the cytoplasm. It catalyses the reaction L-homoserine + succinyl-CoA = O-succinyl-L-homoserine + CoA. Its pathway is amino-acid biosynthesis; L-methionine biosynthesis via de novo pathway; O-succinyl-L-homoserine from L-homoserine: step 1/1. Its function is as follows. Transfers a succinyl group from succinyl-CoA to L-homoserine, forming succinyl-L-homoserine. The sequence is that of Homoserine O-succinyltransferase from Pseudomonas syringae pv. tomato (strain ATCC BAA-871 / DC3000).